We begin with the raw amino-acid sequence, 131 residues long: MRHYEIVFMVHPDQSEQVPGMIERYTGAITAAAGTIHRLEDWGRRQLAYPINKLHKAHYVLLNVEAPQEAIDELETNFRFNDAVIRSMVMRTKHAVTEASPMVKAKDERRERREDFANETADDSEAGDSEE.

Residues 98-131 form a disordered region; it reads EASPMVKAKDERRERREDFANETADDSEAGDSEE. Basic and acidic residues predominate over residues 104–116; sequence KAKDERRERREDF. The span at 120 to 131 shows a compositional bias: acidic residues; that stretch reads TADDSEAGDSEE.

This sequence belongs to the bacterial ribosomal protein bS6 family.

Functionally, binds together with bS18 to 16S ribosomal RNA. This chain is Small ribosomal subunit protein bS6, found in Klebsiella pneumoniae (strain 342).